The chain runs to 355 residues: tRNA N6-adenosine threonylcarbamoyltransferase (355 aa).

Fe cation is bound by residues His-111 and His-115. Substrate is bound by residues 134-138 (LVSGG), Asp-167, Gly-180, Asp-184, and Asn-279. Residue Asp-307 participates in Fe cation binding.

Belongs to the KAE1 / TsaD family. It depends on Fe(2+) as a cofactor.

It is found in the cytoplasm. It catalyses the reaction L-threonylcarbamoyladenylate + adenosine(37) in tRNA = N(6)-L-threonylcarbamoyladenosine(37) in tRNA + AMP + H(+). Functionally, required for the formation of a threonylcarbamoyl group on adenosine at position 37 (t(6)A37) in tRNAs that read codons beginning with adenine. Is involved in the transfer of the threonylcarbamoyl moiety of threonylcarbamoyl-AMP (TC-AMP) to the N6 group of A37, together with TsaE and TsaB. TsaD likely plays a direct catalytic role in this reaction. This is tRNA N6-adenosine threonylcarbamoyltransferase from Picosynechococcus sp. (strain ATCC 27264 / PCC 7002 / PR-6) (Agmenellum quadruplicatum).